Consider the following 497-residue polypeptide: Type II secretion system protein E (497 aa).

255–262 (GPTGSGKS) serves as a coordination point for ATP. Positions 388, 391, 419, and 422 each coordinate Zn(2+).

This sequence belongs to the GSP E family. In terms of assembly, forms homooligomers; most probably hexamers. Interacts with PulL/GspL. Zn(2+) is required as a cofactor.

Its subcellular location is the cell inner membrane. It catalyses the reaction ATP + H2O + cellular proteinSide 1 = ADP + phosphate + cellular proteinSide 2.. Functionally, ATPase component of the type II secretion system required for the energy-dependent secretion of extracellular factors such as proteases and toxins from the periplasm. Acts as a molecular motor to provide the energy that is required for assembly of the pseudopilus and the extrusion of substrates generated in the cytoplasm. In Klebsiella pneumoniae, this protein is Type II secretion system protein E (pulE).